A 1818-amino-acid chain; its full sequence is Nestin (1818 aa).

The coil 1B stretch occupies residues 1-14; it reads WREKLEAEVQRQNL. The 135-residue stretch at 1–135 folds into the IF rod domain; that stretch reads WREKLEAEVQ…TLLEAENSRL (135 aa). Residues 15-17 form a linker 2 region; sequence YQE. The tract at residues 18–135 is coil 2B; sequence RVAHMESSLG…TLLEAENSRL (118 aa). S133 carries the post-translational modification Phosphoserine. The tail stretch occupies residues 136–1818; the sequence is QTPGRSSQAS…DRDSWSSGED (1683 aa). T137 and T160 each carry phosphothreonine. S180 bears the Phosphoserine mark. Phosphothreonine is present on T210. Disordered regions lie at residues 266–309, 336–355, 377–451, and 480–787; these read EEAG…GSSI, AQET…SQGP, HETP…SPEG, and AFKK…EEDQ. Phosphoserine is present on S288. Over residues 292–303 the composition is skewed to basic and acidic residues; sequence PVLEAKDGDSTE. Polar residues predominate over residues 382–398; it reads KENCNSLRSVDENQGTL. A phosphoserine mark is found at S390 and S400. Composition is skewed to basic and acidic residues over residues 400-427 and 434-443; these read SPEE…EKGV and LGKEDPRIED. S448 carries the phosphoserine modification. A compositionally biased stretch (basic and acidic residues) spans 495-508; sequence EIQRVERLIEKEGQ. S513 is subject to Phosphoserine. 2 stretches are compositionally biased toward basic and acidic residues: residues 521–536 and 565–586; these read TDRP…LKPV and TDRP…KEGQ. The residue at position 591 (S591) is a Phosphoserine. 3 stretches are compositionally biased toward basic and acidic residues: residues 599–614, 643–664, and 711–732; these read TDRP…LKPV and TDRP…KEGQ. S737 carries the post-translational modification Phosphoserine. The span at 744-773 shows a compositional bias: basic and acidic residues; the sequence is ETYRLLEKENGEPLKPVEEEDQRVERLIEK. A phosphoserine mark is found at S803 and S824. Residues 866 to 900 form a disordered region; that stretch reads ESLLKKGTQESLESHEDRNQETQDPQRFLEEEGQG. Residues 868-886 are compositionally biased toward basic and acidic residues; it reads LLKKGTQESLESHEDRNQE. S915 and S957 each carry phosphoserine. Residues 945-998 form a disordered region; it reads SLLERESQDSGKSLEGQEAFRCLGKEDPESLQFPEVQDQEIQRSLQQETQQTLG. A compositionally biased stretch (polar residues) spans 986 to 997; sequence QRSLQQETQQTL. K1043 is covalently cross-linked (Glycyl lysine isopeptide (Lys-Gly) (interchain with G-Cter in SUMO1); alternate). A Glycyl lysine isopeptide (Lys-Gly) (interchain with G-Cter in SUMO2); alternate cross-link involves residue K1043. Phosphoserine is present on residues S1052, S1063, S1073, S1123, S1134, S1162, and S1238. Disordered stretches follow at residues 1134–1262 and 1334–1818; these read SPEA…LEGQ and HPSL…SGED. Basic and acidic residues-rich tracts occupy residues 1342-1361 and 1401-1416; these read VEAK…KEAG and ASDH…RPSE. A compositionally biased stretch (acidic residues) spans 1490–1505; that stretch reads QDWEESREESEADELG. Phosphoserine is present on residues S1495, S1499, and S1523. Over residues 1570–1579 the composition is skewed to acidic residues; it reads LSSEEFEDLG. Residues S1614 and S1623 each carry the phosphoserine modification. Residues 1616–1636 show a composition bias toward acidic residues; it reads GFADEEESGEEGEEEEHEDGT. Positions 1686–1697 are enriched in polar residues; that stretch reads GLETESQDSAEP. Phosphoserine occurs at positions 1698, 1700, 1791, 1814, and 1815. The span at 1698-1708 shows a compositional bias: low complexity; that stretch reads SGSEVSESVSS.

Belongs to the intermediate filament family. As to quaternary structure, interacts with FHOD3. Forms homodimers and homotetramers in vitro. In mixtures with other intermediate filament proteins such as vimentin and alpha-internexin, preferentially forms heterodimers which can assemble to form intermediate filaments if nestin does not exceed 25%. Post-translationally, constitutively phosphorylated. This increases during mitosis when the cytoplasmic intermediate filament network is reorganized.

Functionally, required for brain and eye development. Promotes the disassembly of phosphorylated vimentin intermediate filaments (IF) during mitosis and may play a role in the trafficking and distribution of IF proteins and other cellular factors to daughter cells during progenitor cell division. Required for survival, renewal and mitogen-stimulated proliferation of neural progenitor cells. The chain is Nestin from Mesocricetus auratus (Golden hamster).